A 74-amino-acid chain; its full sequence is Exodeoxyribonuclease 7 small subunit (74 aa).

Belongs to the XseB family. Heterooligomer composed of large and small subunits.

The protein resides in the cytoplasm. It catalyses the reaction Exonucleolytic cleavage in either 5'- to 3'- or 3'- to 5'-direction to yield nucleoside 5'-phosphates.. Its function is as follows. Bidirectionally degrades single-stranded DNA into large acid-insoluble oligonucleotides, which are then degraded further into small acid-soluble oligonucleotides. The chain is Exodeoxyribonuclease 7 small subunit from Neisseria meningitidis serogroup A / serotype 4A (strain DSM 15465 / Z2491).